The sequence spans 277 residues: MEMO1 family protein MTH_45 (277 aa).

Belongs to the MEMO1 family.

This Methanothermobacter thermautotrophicus (strain ATCC 29096 / DSM 1053 / JCM 10044 / NBRC 100330 / Delta H) (Methanobacterium thermoautotrophicum) protein is MEMO1 family protein MTH_45.